Consider the following 121-residue polypeptide: Ribonuclease P protein component (121 aa).

It belongs to the RnpA family. In terms of assembly, consists of a catalytic RNA component (M1 or rnpB) and a protein subunit.

It carries out the reaction Endonucleolytic cleavage of RNA, removing 5'-extranucleotides from tRNA precursor.. RNaseP catalyzes the removal of the 5'-leader sequence from pre-tRNA to produce the mature 5'-terminus. It can also cleave other RNA substrates such as 4.5S RNA. The protein component plays an auxiliary but essential role in vivo by binding to the 5'-leader sequence and broadening the substrate specificity of the ribozyme. This is Ribonuclease P protein component from Chromobacterium violaceum (strain ATCC 12472 / DSM 30191 / JCM 1249 / CCUG 213 / NBRC 12614 / NCIMB 9131 / NCTC 9757 / MK).